The following is a 494-amino-acid chain: Costunolide synthase (494 aa).

Residues Pro-3–Ser-23 traverse the membrane as a helical segment. Cys-432 is a heme binding site.

Belongs to the cytochrome P450 family. Heme is required as a cofactor.

It localises to the membrane. The enzyme catalyses germacra-1(10),4,11(13)-trien-12-oate + reduced [NADPH--hemoprotein reductase] + O2 = (+)-costunolide + oxidized [NADPH--hemoprotein reductase] + 2 H2O. Its function is as follows. Hydroxylates germacrene A acid to 6-alpha-hydroxy-germacrne A acid, a precursor of sesquiterpene lactones that spontaneously undergoes a lactonization which yields costunolide. Costunolide can then spontaneously conjugate to glutathione or cysteine. The sequence is that of Costunolide synthase (CYP71BL3) from Cichorium intybus (Chicory).